A 598-amino-acid chain; its full sequence is Probable translation initiation factor IF-2 (598 aa).

The 221-residue stretch at 3 to 223 folds into the tr-type G domain; the sequence is LRCPIVSVLG…ISGLAQRFME (221 aa). A G1 region spans residues 12–19; sequence GHVDHGKT. Residue 12-19 coordinates GTP; the sequence is GHVDHGKT. Residues 37–41 form a G2 region; the sequence is GITQH. The interval 76–79 is G3; sequence DTPG. GTP contacts are provided by residues 76–80 and 130–133; these read DTPGH and NKID. The G4 stretch occupies residues 130-133; that stretch reads NKID. The tract at residues 200-202 is G5; that stretch reads SAM.

Belongs to the TRAFAC class translation factor GTPase superfamily. Classic translation factor GTPase family. IF-2 subfamily.

In terms of biological role, function in general translation initiation by promoting the binding of the formylmethionine-tRNA to ribosomes. Seems to function along with eIF-2. This is Probable translation initiation factor IF-2 from Methanococcus aeolicus (strain ATCC BAA-1280 / DSM 17508 / OCM 812 / Nankai-3).